A 273-amino-acid chain; its full sequence is Formamidopyrimidine-DNA glycosylase (273 aa).

Pro-2 acts as the Schiff-base intermediate with DNA in catalysis. Glu-3 acts as the Proton donor in catalysis. Lys-57 acts as the Proton donor; for beta-elimination activity in catalysis. His-91, Arg-110, and Lys-151 together coordinate DNA. Residues 236-270 (QVYGRKDEACNDCGTIIEAKVIGQRNSYFCPHCQM) form an FPG-type zinc finger. Arg-260 acts as the Proton donor; for delta-elimination activity in catalysis.

Belongs to the FPG family. In terms of assembly, monomer. The cofactor is Zn(2+).

It carries out the reaction Hydrolysis of DNA containing ring-opened 7-methylguanine residues, releasing 2,6-diamino-4-hydroxy-5-(N-methyl)formamidopyrimidine.. The enzyme catalyses 2'-deoxyribonucleotide-(2'-deoxyribose 5'-phosphate)-2'-deoxyribonucleotide-DNA = a 3'-end 2'-deoxyribonucleotide-(2,3-dehydro-2,3-deoxyribose 5'-phosphate)-DNA + a 5'-end 5'-phospho-2'-deoxyribonucleoside-DNA + H(+). Functionally, involved in base excision repair of DNA damaged by oxidation or by mutagenic agents. Acts as a DNA glycosylase that recognizes and removes damaged bases. Has a preference for oxidized purines, such as 7,8-dihydro-8-oxoguanine (8-oxoG). Has AP (apurinic/apyrimidinic) lyase activity and introduces nicks in the DNA strand. Cleaves the DNA backbone by beta-delta elimination to generate a single-strand break at the site of the removed base with both 3'- and 5'-phosphates. This Actinobacillus pleuropneumoniae serotype 5b (strain L20) protein is Formamidopyrimidine-DNA glycosylase.